Here is a 265-residue protein sequence, read N- to C-terminus: UDP-N-acetylenolpyruvoylglucosamine reductase (265 aa).

Positions 15–169 (GVGGPAELWT…TRVRLKLKER (155 aa)) constitute an FAD-binding PCMH-type domain. R149 is a catalytic residue. A disordered region spans residues 182–203 (DRARKGQPKRKSAGCAFKNPPG). The active-site Proton donor is the C196.

Belongs to the MurB family. The cofactor is FAD.

It localises to the cytoplasm. It catalyses the reaction UDP-N-acetyl-alpha-D-muramate + NADP(+) = UDP-N-acetyl-3-O-(1-carboxyvinyl)-alpha-D-glucosamine + NADPH + H(+). It functions in the pathway cell wall biogenesis; peptidoglycan biosynthesis. Its function is as follows. Cell wall formation. The chain is UDP-N-acetylenolpyruvoylglucosamine reductase from Thermus thermophilus (strain ATCC 27634 / DSM 579 / HB8).